The chain runs to 208 residues: Thymidylate kinase (208 aa).

Residue 10-17 coordinates ATP; the sequence is GPDGSGKT.

This sequence belongs to the thymidylate kinase family.

It catalyses the reaction dTMP + ATP = dTDP + ADP. Phosphorylation of dTMP to form dTDP in both de novo and salvage pathways of dTTP synthesis. The chain is Thymidylate kinase from Listeria welshimeri serovar 6b (strain ATCC 35897 / DSM 20650 / CCUG 15529 / CIP 8149 / NCTC 11857 / SLCC 5334 / V8).